Reading from the N-terminus, the 247-residue chain is MRILVTNDDGIQSKGIIILAELLSEEHDVFVVAPDKERSATGHSITIHVPLWIKKVFISERVVAYSTTGTPADCVKLAYNVIMDKKVDLIVSGVNRGPNMGMDILYSGTVSGAMEGAMMNIPSIAISSANYESPDFEGAARFLIDFLKEFDFSLLDPFTMLNINVPAGEIKGWKFTRQSRRRWNDYFEERVSPFGEKYYWMMGEVIEDDDRDDVDYKAVREGYVSITPIHPFLTNERCLKKLREVYD.

Residues aspartate 8, aspartate 9, serine 39, and asparagine 95 each contribute to the a divalent metal cation site.

The protein belongs to the SurE nucleotidase family. It depends on a divalent metal cation as a cofactor.

Its subcellular location is the cytoplasm. The catalysed reaction is a ribonucleoside 5'-phosphate + H2O = a ribonucleoside + phosphate. Nucleotidase that shows phosphatase activity on nucleoside 5'-monophosphates. This is 5'-nucleotidase SurE from Thermotoga petrophila (strain ATCC BAA-488 / DSM 13995 / JCM 10881 / RKU-1).